We begin with the raw amino-acid sequence, 488 residues long: Endoglucanase A (488 aa).

Substrate is bound by residues His-59, 63–64 (WY), Tyr-90, and His-125. The active-site Proton donor is Glu-163. Tyr-226 serves as a coordination point for substrate. Catalysis depends on Glu-252, which acts as the Nucleophile. Residues 258 to 259 (AT), Trp-286, and 291 to 293 (KDE) contribute to the substrate site. 2 disordered regions span residues 326 to 362 (ESAS…AWDP) and 388 to 451 (EPGA…WDPT). Composition is skewed to pro residues over residues 332–353 (PSDP…PPSD) and 405–416 (PSEPSDPPPPSE). The segment covering 417–433 (PEPDPGEPDPGEPDPGE) has biased composition (acidic residues).

It belongs to the glycosyl hydrolase 5 (cellulase A) family.

It carries out the reaction Endohydrolysis of (1-&gt;4)-beta-D-glucosidic linkages in cellulose, lichenin and cereal beta-D-glucans.. The protein is Endoglucanase A (celA) of Evansella cellulosilytica (strain ATCC 21833 / DSM 2522 / FERM P-1141 / JCM 9156 / N-4) (Bacillus cellulosilyticus).